A 162-amino-acid polypeptide reads, in one-letter code: Nucleotide-binding protein Franean1_6074 (162 aa).

Belongs to the YajQ family.

Functionally, nucleotide-binding protein. The polypeptide is Nucleotide-binding protein Franean1_6074 (Parafrankia sp. (strain EAN1pec)).